The primary structure comprises 253 residues: ER membrane protein complex subunit 3 (253 aa).

Helical transmembrane passes span 10 to 30 (WVLL…QYIM), 126 to 146 (FIPQ…FILM), and 176 to 196 (SISW…LIGL).

Belongs to the EMC3 family. In terms of assembly, component of the ER membrane protein complex (EMC), which is composed of EMC1, EMC2, EMC3, EMC4, EMC5 and EMC6.

Its subcellular location is the endoplasmic reticulum membrane. Functionally, the EMC seems to be required for efficient folding of proteins in the endoplasmic reticulum (ER). This is ER membrane protein complex subunit 3 (AIM27) from Saccharomyces cerevisiae (strain RM11-1a) (Baker's yeast).